We begin with the raw amino-acid sequence, 364 residues long: Probable dual-specificity RNA methyltransferase RlmN (364 aa).

Glutamate 107 (proton acceptor) is an active-site residue. The 234-residue stretch at 113 to 346 (HEYGNSVCVT…ATIRREQGAD (234 aa)) folds into the Radical SAM core domain. Residues cysteine 120 and cysteine 351 are joined by a disulfide bond. Residues cysteine 127, cysteine 131, and cysteine 134 each coordinate [4Fe-4S] cluster. S-adenosyl-L-methionine contacts are provided by residues 177–178 (GE), serine 209, 232–234 (SLH), and asparagine 308. Catalysis depends on cysteine 351, which acts as the S-methylcysteine intermediate.

Belongs to the radical SAM superfamily. RlmN family. [4Fe-4S] cluster is required as a cofactor.

The protein resides in the cytoplasm. The catalysed reaction is adenosine(2503) in 23S rRNA + 2 reduced [2Fe-2S]-[ferredoxin] + 2 S-adenosyl-L-methionine = 2-methyladenosine(2503) in 23S rRNA + 5'-deoxyadenosine + L-methionine + 2 oxidized [2Fe-2S]-[ferredoxin] + S-adenosyl-L-homocysteine. It catalyses the reaction adenosine(37) in tRNA + 2 reduced [2Fe-2S]-[ferredoxin] + 2 S-adenosyl-L-methionine = 2-methyladenosine(37) in tRNA + 5'-deoxyadenosine + L-methionine + 2 oxidized [2Fe-2S]-[ferredoxin] + S-adenosyl-L-homocysteine. Functionally, specifically methylates position 2 of adenine 2503 in 23S rRNA and position 2 of adenine 37 in tRNAs. Confers resistance to some classes of antibiotics. The polypeptide is Probable dual-specificity RNA methyltransferase RlmN (Staphylococcus saprophyticus subsp. saprophyticus (strain ATCC 15305 / DSM 20229 / NCIMB 8711 / NCTC 7292 / S-41)).